Consider the following 367-residue polypeptide: ELAV-like protein 3 (367 aa).

3 consecutive RRM domains span residues 39 to 117, 125 to 205, and 284 to 362; these read TNLI…YARP, ANLY…FANN, and WCIF…FKTS.

Belongs to the RRM elav family. In terms of assembly, interacts with MAP1B light chain LC1. As to expression, brain specific.

In terms of biological role, RNA-binding protein that binds to AU-rich element (ARE) sequences of target mRNAs, including VEGF mRNA. May also bind poly-A tracts via RRM 3. May be involved in neuronal differentiation and maintenance. Plays a role in the stabilization of GAP43 mRNA and in spatial learning. In Homo sapiens (Human), this protein is ELAV-like protein 3 (ELAVL3).